Consider the following 300-residue polypeptide: Probable protein phosphatase 2C 2 (300 aa).

The 276-residue stretch at 23–298 (IFAASEMQGW…DNMTTILVYL (276 aa)) folds into the PPM-type phosphatase domain. Positions 57, 58, 237, and 289 each coordinate Mn(2+).

It belongs to the PP2C family. Mg(2+) serves as cofactor. The cofactor is Mn(2+).

Its subcellular location is the membrane. It catalyses the reaction O-phospho-L-seryl-[protein] + H2O = L-seryl-[protein] + phosphate. The enzyme catalyses O-phospho-L-threonyl-[protein] + H2O = L-threonyl-[protein] + phosphate. Its function is as follows. Enzyme with a broad specificity. In Paramecium tetraurelia, this protein is Probable protein phosphatase 2C 2.